The chain runs to 503 residues: Alpha-1,3/1,6-mannosyltransferase ALG2 (503 aa).

A run of 2 helical transmembrane segments spans residues 64-84 and 112-132; these read VYGD…FATI and TCIP…CHFP. Residues N170, N303, N371, and N400 are each glycosylated (N-linked (GlcNAc...) asparagine). Residues 443-463 traverse the membrane as a helical segment; the sequence is WEIFGISFSNFILHMAFIKIL.

This sequence belongs to the glycosyltransferase group 1 family. Glycosyltransferase 4 subfamily. In terms of assembly, interacts with ALG1.

The protein localises to the endoplasmic reticulum membrane. The catalysed reaction is a beta-D-Man-(1-&gt;4)-beta-D-GlcNAc-(1-&gt;4)-alpha-D-GlcNAc-diphospho-di-trans,poly-cis-dolichol + GDP-alpha-D-mannose = an alpha-D-Man-(1-&gt;3)-beta-D-Man-(1-&gt;4)-beta-D-GlcNAc-(1-&gt;4)-alpha-D-GlcNAc-diphospho-di-trans,poly-cis-dolichol + GDP + H(+). The enzyme catalyses an alpha-D-Man-(1-&gt;3)-beta-D-Man-(1-&gt;4)-beta-D-GlcNAc-(1-&gt;4)-alpha-D-GlcNAc-diphospho-di-trans,poly-cis-dolichol + GDP-alpha-D-mannose = an alpha-D-Man-(1-&gt;3)-[alpha-D-Man-(1-&gt;6)]-beta-D-Man-(1-&gt;4)-beta-D-GlcNAc-(1-&gt;4)-alpha-D-GlcNAc-diphospho-di-trans,poly-cis-dolichol + GDP + H(+). The protein operates within protein modification; protein glycosylation. Mannosylates Man(2)GlcNAc(2)-dolichol diphosphate and Man(1)GlcNAc(2)-dolichol diphosphate to form Man(3)GlcNAc(2)-dolichol diphosphate. The polypeptide is Alpha-1,3/1,6-mannosyltransferase ALG2 (ALG2) (Saccharomyces cerevisiae (strain ATCC 204508 / S288c) (Baker's yeast)).